Here is a 552-residue protein sequence, read N- to C-terminus: uncharacterized protein (552 aa).

The DhaL domain maps to 8–200; that stretch reads KLFADMIIQG…LLCVYEGFLK (193 aa).

This is an uncharacterized protein from Staphylococcus haemolyticus (strain JCSC1435).